Here is a 564-residue protein sequence, read N- to C-terminus: uncharacterized protein (564 aa).

Helical transmembrane passes span 12 to 32 (TYYLWIALFLLLLYVSPLFIL), 97 to 119 (MTAYAISQTVTRVVAFFGMYVLL), 139 to 161 (AFALTPFWPSGMLSTLGYPLALW), 188 to 208 (FVLGFFFFLAGMACFWLYDAI), 213 to 233 (WNLMFLGSIAFMTSIYLFVEY), 277 to 297 (MTVHTVVILPILMVVFAALLF), 306 to 326 (NVYLFLCVLNYGLSLWYAFWF), and 348 to 368 (FHFLRPLVIYVSFALALYLIW).

Its subcellular location is the cell membrane. This is an uncharacterized protein from Bacillus subtilis (strain 168).